Reading from the N-terminus, the 475-residue chain is MQYEAVIGLEVHAQLLTESKIFCGCSTQFGAEPNTQVCPVCLGMPGVLPVLNKKAVEYTVKTGLAMNCKIAPYSRFARKNYFYPDLPKGYQISQYELPLCEDGYLEIMLNGTKRKIRIKRIHLEEDAGKNIHDPSGYSFVDFNRTGVPLMEIVSEPDIRSPKEAALYMKKLRAILRYLGVCDGNLEQGSLRCDANVSVRPVGSTEFGVKTEIKNINSFRFVEKALEYEIKRQIKLIENGEKIIQETRLWDSQTGTTQSMRSKEEAHDYRYFPEPDLVPVVVSEDWIEKIKKDMPELPDQKIERFIKEYGLPQYDSEILTEEKALSEWFEEAVKLGGKPKEVANWIMVELLRLLNEEGKDINECSLKPIQLVELIELINKGTINRNTAKEVFEEMYKTGKTAEAIVREKGLTQISDDSVIIEAIKEVMNKNPKEVERFRNGEEKLIGFFVGQVMKITKGKANPKLVNELIFKILKE.

This sequence belongs to the GatB/GatE family. GatB subfamily. Heterotrimer of A, B and C subunits.

The catalysed reaction is L-glutamyl-tRNA(Gln) + L-glutamine + ATP + H2O = L-glutaminyl-tRNA(Gln) + L-glutamate + ADP + phosphate + H(+). The enzyme catalyses L-aspartyl-tRNA(Asn) + L-glutamine + ATP + H2O = L-asparaginyl-tRNA(Asn) + L-glutamate + ADP + phosphate + 2 H(+). Allows the formation of correctly charged Asn-tRNA(Asn) or Gln-tRNA(Gln) through the transamidation of misacylated Asp-tRNA(Asn) or Glu-tRNA(Gln) in organisms which lack either or both of asparaginyl-tRNA or glutaminyl-tRNA synthetases. The reaction takes place in the presence of glutamine and ATP through an activated phospho-Asp-tRNA(Asn) or phospho-Glu-tRNA(Gln). The polypeptide is Aspartyl/glutamyl-tRNA(Asn/Gln) amidotransferase subunit B (Thermodesulfovibrio yellowstonii (strain ATCC 51303 / DSM 11347 / YP87)).